The primary structure comprises 147 residues: Cyanate hydratase (147 aa).

Residues arginine 88, glutamate 91, and serine 114 contribute to the active site.

This sequence belongs to the cyanase family.

It catalyses the reaction cyanate + hydrogencarbonate + 3 H(+) = NH4(+) + 2 CO2. Functionally, catalyzes the reaction of cyanate with bicarbonate to produce ammonia and carbon dioxide. The sequence is that of Cyanate hydratase from Dechloromonas aromatica (strain RCB).